Consider the following 399-residue polypeptide: Zinc finger HIT domain-containing protein 2 (399 aa).

Residue Met1 is modified to N-acetylmethionine. Zn(2+)-binding residues include Cys7, Cys10, Cys22, Cys25, Cys30, Cys34, His38, and Cys41. The HIT-type zinc-finger motif lies at 7–41; sequence CGFCPTGEAQPARYTCPRCNVPYCSLRCYRAHGSC. Disordered regions lie at residues 71–97 and 141–166; these read LRQQRETEDEPGDAGLRPGPAPGGLSG and EELGDAPSGDAEELEPSPARMPPEPV.

As to quaternary structure, interacts (via HIT-type zinc finger) with RUVBL2 in the presence of ATP or ADP; shows a stronger interaction in the presence of ADP.

Its function is as follows. May act as a bridging factor mediating the interaction between the R2TP/Prefoldin-like (R2TP/PFDL) complex and U5 small nuclear ribonucleoprotein (U5 snRNP). Required for the interaction of R2TP complex subunit RPAP3 and prefoldin-like subunit URI1 with U5 snRNP proteins EFTUD2 and PRPF8. May play a role in regulating the composition of the U5 snRNP complex. In Bos taurus (Bovine), this protein is Zinc finger HIT domain-containing protein 2 (ZNHIT2).